A 685-amino-acid polypeptide reads, in one-letter code: tRNA-dihydrouridine(47) synthase [NAD(P)(+)]-like (685 aa).

Residues 1–12 (MAATAAAAAAAP) show a composition bias toward low complexity. 3 disordered regions span residues 1-91 (MAAT…SSSH), 209-234 (AAND…PLCN), and 257-314 (LIDN…SCRT). Residues 13 to 29 (PADPPDSSPAASSPPRP) show a composition bias toward pro residues. The C3H1-type zinc-finger motif lies at 87 to 118 (KSSSHLCIEVGKSGNVSSCKYGDSCRFSHDID). Composition is skewed to basic and acidic residues over residues 209–221 (AAND…HDNL) and 273–284 (SKVESDEIDKHG). Positions 287-314 (TLNTNTESEDPNLSNGLEPSNNSSSCRT) are enriched in polar residues. FMN is bound by residues 338-340 (PLT) and Gln392. The Proton donor role is filled by Cys423. Residues Lys462, His492, 525–527 (NGD), and 550–551 (AR) contribute to the FMN site.

This sequence belongs to the Dus family. Dus3 subfamily. Requires FMN as cofactor.

It catalyses the reaction 5,6-dihydrouridine(47) in tRNA + NAD(+) = uridine(47) in tRNA + NADH + H(+). It carries out the reaction 5,6-dihydrouridine(47) in tRNA + NADP(+) = uridine(47) in tRNA + NADPH + H(+). The catalysed reaction is a 5,6-dihydrouridine in mRNA + NAD(+) = a uridine in mRNA + NADH + H(+). The enzyme catalyses a 5,6-dihydrouridine in mRNA + NADP(+) = a uridine in mRNA + NADPH + H(+). Functionally, catalyzes the synthesis of dihydrouridine, a modified base found in the D-loop of most tRNAs. Specifically modifies U47 in cytoplasmic tRNAs. Catalyzes the synthesis of dihydrouridine in some mRNAs, thereby affecting their translation. In Oryza sativa subsp. japonica (Rice), this protein is tRNA-dihydrouridine(47) synthase [NAD(P)(+)]-like.